Here is a 105-residue protein sequence, read N- to C-terminus: Gastrin/cholecystokinin-like peptide (105 aa).

The first 20 residues, 1–20 (MKTKVFLGLILSAAVTACLC), serve as a signal peptide directing secretion. Positions 21 to 38 (RPAAKAPGGSHRPTSSLA) are excised as a propeptide. The tract at residues 24 to 51 (AKAPGGSHRPTSSLARRDWPEPPSQEQQ) is disordered. The residue at position 87 (Tyr-87) is a Sulfotyrosine. Position 93 is a phenylalanine amide (Phe-93). Positions 97 to 105 (STEDAADAA) are excised as a propeptide.

Belongs to the gastrin/cholecystokinin family.

It localises to the secreted. Potent stimulus of gastric acid, but not of pancreatic secretion. This Gallus gallus (Chicken) protein is Gastrin/cholecystokinin-like peptide.